Consider the following 389-residue polypeptide: Sulfate adenylyltransferase (389 aa).

This sequence belongs to the sulfate adenylyltransferase family.

The catalysed reaction is sulfate + ATP + H(+) = adenosine 5'-phosphosulfate + diphosphate. The protein operates within sulfur metabolism; hydrogen sulfide biosynthesis; sulfite from sulfate: step 1/3. The protein is Sulfate adenylyltransferase of Hyperthermus butylicus (strain DSM 5456 / JCM 9403 / PLM1-5).